A 309-amino-acid polypeptide reads, in one-letter code: Xylose/arabinose import permease protein XacI (309 aa).

Helical transmembrane passes span 29 to 49 (LVVF…MTAI), 89 to 109 (LIMS…AAYG), 121 to 141 (MLML…VPLA), 170 to 190 (ELVP…TILF), 227 to 247 (MFGV…LFAF), and 282 to 302 (AAFL…EQFA). Residues 85–297 (FFNSLIMSIP…VPTLILYVAF (213 aa)) enclose the ABC transmembrane type-1 domain.

The protein belongs to the binding-protein-dependent transport system permease family. The complex is composed of two ATP-binding proteins (XacJ and XacK), two transmembrane proteins (XacH and XacI) and a solute-binding protein (XacG).

It localises to the cell membrane. Its function is as follows. Part of the ABC transporter complex XacGHIJK involved in the uptake of xylose and arabinose. Responsible for the translocation of the substrate across the membrane. In Haloferax volcanii (strain ATCC 29605 / DSM 3757 / JCM 8879 / NBRC 14742 / NCIMB 2012 / VKM B-1768 / DS2) (Halobacterium volcanii), this protein is Xylose/arabinose import permease protein XacI.